A 674-amino-acid polypeptide reads, in one-letter code: Cysteine-rich receptor-like protein kinase 6 (674 aa).

Positions 1 to 24 (MSSLISFNFLFLFSFLTSSFTASA) are cleaved as a signal peptide. Residues 25-289 (QDPFYLNHYC…LPGKSGNSTV (265 aa)) lie on the Extracellular side of the membrane. 2 consecutive Gnk2-homologous domains span residues 28–132 (FYLN…HKNI) and 139–245 (NEGE…LYPF). Residues Asn-36, Asn-43, Asn-61, Asn-70, Asn-104, Asn-178, and Asn-247 are each glycosylated (N-linked (GlcNAc...) asparagine). Over residues 254 to 266 (PPLPPPPPPPPPR) the composition is skewed to pro residues. Residues 254–284 (PPLPPPPPPPPPRESLVSTPPISSSSLPGKS) are disordered. Residues 268 to 284 (SLVSTPPISSSSLPGKS) show a composition bias toward low complexity. The N-linked (GlcNAc...) asparagine glycan is linked to Asn-286. A helical membrane pass occupies residues 290-310 (LVVAVVVLAVLLFIALVGYCF). Residues 311 to 674 (LAKKKKKTFD…DESITDLYPR (364 aa)) lie on the Cytoplasmic side of the membrane. In terms of domain architecture, Protein kinase spans 351–637 (FAESNKIGRG…TLPVPRQPGF (287 aa)). ATP-binding positions include 357 to 365 (IGRGGFGEV) and Lys-379. At Tyr-424 the chain carries Phosphotyrosine. Residue Asp-476 is the Proton acceptor of the active site. Ser-480 carries the post-translational modification Phosphoserine. Thr-516 carries the phosphothreonine modification. Phosphotyrosine is present on Tyr-524. The interval 648 to 674 (LDSDQSTTTKSFPASIDDESITDLYPR) is disordered. The segment covering 650-659 (SDQSTTTKSF) has biased composition (polar residues).

Belongs to the protein kinase superfamily. Ser/Thr protein kinase family. CRK subfamily.

Its subcellular location is the membrane. The enzyme catalyses L-seryl-[protein] + ATP = O-phospho-L-seryl-[protein] + ADP + H(+). It catalyses the reaction L-threonyl-[protein] + ATP = O-phospho-L-threonyl-[protein] + ADP + H(+). The polypeptide is Cysteine-rich receptor-like protein kinase 6 (CRK6) (Arabidopsis thaliana (Mouse-ear cress)).